A 534-amino-acid chain; its full sequence is Probable bifunctional tRNA threonylcarbamoyladenosine biosynthesis protein (534 aa).

Positions M1–W325 are kae1. Positions 108, 112, and 129 each coordinate Fe cation. L-threonylcarbamoyladenylate-binding positions include Y129–G133, D161, G174, E178, and N258. A Fe cation-binding site is contributed by D286. The Protein kinase domain maps to L335 to D534. Residues L340–I348 and K361 each bind ATP. D451 acts as the Proton acceptor; for kinase activity in catalysis.

This sequence in the N-terminal section; belongs to the KAE1 / TsaD family. The protein in the C-terminal section; belongs to the protein kinase superfamily. Tyr protein kinase family. BUD32 subfamily. As to quaternary structure, component of the KEOPS complex that consists of Kae1, Bud32, Cgi121 and Pcc1; the whole complex dimerizes. It depends on Fe(2+) as a cofactor.

It localises to the cytoplasm. The enzyme catalyses L-seryl-[protein] + ATP = O-phospho-L-seryl-[protein] + ADP + H(+). It catalyses the reaction L-threonyl-[protein] + ATP = O-phospho-L-threonyl-[protein] + ADP + H(+). The catalysed reaction is L-threonylcarbamoyladenylate + adenosine(37) in tRNA = N(6)-L-threonylcarbamoyladenosine(37) in tRNA + AMP + H(+). Required for the formation of a threonylcarbamoyl group on adenosine at position 37 (t(6)A37) in tRNAs that read codons beginning with adenine. Is a component of the KEOPS complex that is probably involved in the transfer of the threonylcarbamoyl moiety of threonylcarbamoyl-AMP (TC-AMP) to the N6 group of A37. The Kae1 domain likely plays a direct catalytic role in this reaction. The Bud32 domain probably displays kinase activity that regulates Kae1 function. The chain is Probable bifunctional tRNA threonylcarbamoyladenosine biosynthesis protein from Methanothermobacter thermautotrophicus (strain ATCC 29096 / DSM 1053 / JCM 10044 / NBRC 100330 / Delta H) (Methanobacterium thermoautotrophicum).